A 215-amino-acid polypeptide reads, in one-letter code: 3-demethoxyubiquinol 3-hydroxylase (215 aa).

The Fe cation site is built by E64, E94, H97, E146, E178, and H181.

Belongs to the COQ7 family. The cofactor is Fe cation.

Its subcellular location is the cell membrane. The enzyme catalyses a 5-methoxy-2-methyl-3-(all-trans-polyprenyl)benzene-1,4-diol + AH2 + O2 = a 3-demethylubiquinol + A + H2O. Its pathway is cofactor biosynthesis; ubiquinone biosynthesis. Catalyzes the hydroxylation of 2-nonaprenyl-3-methyl-6-methoxy-1,4-benzoquinol during ubiquinone biosynthesis. This chain is 3-demethoxyubiquinol 3-hydroxylase, found in Pseudomonas fluorescens (strain Pf0-1).